A 167-amino-acid chain; its full sequence is SAR-endolysin (167 aa).

A helical; Signal-anchor for type II membrane protein transmembrane segment spans residues 10 to 32; that stretch reads SVMAAISGGAIAIASVLITGPGG. Catalysis depends on proton donor/acceptor residues glutamate 37 and aspartate 46.

The protein belongs to the glycosyl hydrolase 24 family.

It localises to the host cell inner membrane. The enzyme catalyses Hydrolysis of (1-&gt;4)-beta-linkages between N-acetylmuramic acid and N-acetyl-D-glucosamine residues in a peptidoglycan and between N-acetyl-D-glucosamine residues in chitodextrins.. Its function is as follows. Signal-arrest-release (SAR) endolysin with lysozyme activity that degrades host peptidoglycans and participates with the pinholin and spanin proteins in the sequential events which lead to programmed host cell lysis releasing the mature viral particles. Once the pinholin has permeabilized the host cell membrane, the SAR-endolysin is released into the periplasm where it breaks down the peptidoglycan layer. This Bacteriophage PS119 protein is SAR-endolysin (19).